The following is a 94-amino-acid chain: Co-chaperonin GroES (94 aa).

This sequence belongs to the GroES chaperonin family. Heptamer of 7 subunits arranged in a ring. Interacts with the chaperonin GroEL.

It is found in the cytoplasm. Together with the chaperonin GroEL, plays an essential role in assisting protein folding. The GroEL-GroES system forms a nano-cage that allows encapsulation of the non-native substrate proteins and provides a physical environment optimized to promote and accelerate protein folding. GroES binds to the apical surface of the GroEL ring, thereby capping the opening of the GroEL channel. This Clostridioides difficile (Peptoclostridium difficile) protein is Co-chaperonin GroES.